A 632-amino-acid chain; its full sequence is ATP-dependent zinc metalloprotease FtsH (632 aa).

Residues Met1–Lys9 lie on the Cytoplasmic side of the membrane. A helical membrane pass occupies residues Pro10–Leu30. The Periplasmic portion of the chain corresponds to Arg31–Asn116. A helical transmembrane segment spans residues Phe117–Phe137. Residues Met138–Ser632 are Cytoplasmic-facing. Residue Gly210 to Thr217 coordinates ATP. His434 is a Zn(2+) binding site. Glu435 is a catalytic residue. Zn(2+) contacts are provided by His438 and Asp511.

In the central section; belongs to the AAA ATPase family. It in the C-terminal section; belongs to the peptidase M41 family. In terms of assembly, homohexamer. Requires Zn(2+) as cofactor.

It localises to the cell inner membrane. Acts as a processive, ATP-dependent zinc metallopeptidase for both cytoplasmic and membrane proteins. Plays a role in the quality control of integral membrane proteins. This Helicobacter pylori (strain J99 / ATCC 700824) (Campylobacter pylori J99) protein is ATP-dependent zinc metalloprotease FtsH.